The sequence spans 304 residues: UDP-N-acetylenolpyruvoylglucosamine reductase (304 aa).

Positions 33 to 212 constitute an FAD-binding PCMH-type domain; sequence MGGLADLFLI…KEMMDDLTHK (180 aa). R176 is an active-site residue. S226 functions as the Proton donor in the catalytic mechanism. E296 is an active-site residue.

It belongs to the MurB family. FAD is required as a cofactor.

The protein localises to the cytoplasm. It catalyses the reaction UDP-N-acetyl-alpha-D-muramate + NADP(+) = UDP-N-acetyl-3-O-(1-carboxyvinyl)-alpha-D-glucosamine + NADPH + H(+). The protein operates within cell wall biogenesis; peptidoglycan biosynthesis. Cell wall formation. The protein is UDP-N-acetylenolpyruvoylglucosamine reductase of Exiguobacterium sibiricum (strain DSM 17290 / CCUG 55495 / CIP 109462 / JCM 13490 / 255-15).